Consider the following 608-residue polypeptide: ATP-citrate synthase beta chain protein 1 (608 aa).

ATP is bound by residues 214–234 and 265–291; these read ILRFNNIPQVKMMVVLGELGG and FKSEVQFGHAGAKSGGELESAQAKNQA. Glutamate 231 provides a ligand contact to Mg(2+). Histidine 273 acts as the Tele-phosphohistidine intermediate in catalysis. 292–302 is a binding site for CoA; that stretch reads LKDAGAVVPTS.

This sequence belongs to the succinate/malate CoA ligase alpha subunit family. In terms of assembly, heterooctamer of 4 alpha and 4 beta chains.

It localises to the cytoplasm. Its subcellular location is the cytosol. The enzyme catalyses oxaloacetate + acetyl-CoA + ADP + phosphate = citrate + ATP + CoA. Functionally, ATP citrate-lyase is the primary enzyme responsible for the synthesis of cytosolic acetyl-CoA, used for the elongation of fatty acids and biosynthesis of isoprenoids, flavonoids and malonated derivatives. May supply substrate to the cytosolic acetyl-CoA carboxylase, which generates the malonyl-CoA used for the synthesis of a multitude of compounds, including very long chain fatty acids and flavonoids. In contrast to all known animal ACL enzymes having a homomeric structure, plant ACLs are composed of alpha and beta chains. The sequence is that of ATP-citrate synthase beta chain protein 1 (ACLB-1) from Oryza sativa subsp. japonica (Rice).